A 410-amino-acid polypeptide reads, in one-letter code: Phthiocerol/phthiodiolone dimycocerosyl transferase (410 aa).

H118 acts as the Proton acceptor in catalysis.

The protein belongs to the acyltransferase PapA5 family. Monomer. Interacts directly with the acyl carrier protein (ACP) domain of the mycocerosic acid synthase (mas) protein.

The catalysed reaction is 2 a mycocerosyl-[mycocerosic acid synthase] + a phthiocerol = a dimycocerosyl phthiocerol + 2 holo-[mycocerosic acid synthase].. The enzyme catalyses 2 a mycocerosyl-[mycocerosic acid synthase] + a phthiodiolone = a dimycocerosyl phthiodiolone + 2 holo-[mycocerosic acid synthase].. It carries out the reaction 2 a mycocerosyl-[mycocerosic acid synthase] + a phenolphthiocerol = a dimycocerosyl phenolphthiocerol + 2 holo-[mycocerosic acid synthase].. In terms of biological role, catalyzes diesterification of phthiocerol, phthiodiolone, and phenolphthiocerol with mycocerosic acids, the final step in the phthiocerol, phthiodiolone and phenolphthiocerol dimycocerosate esters (PDIM) synthesis. Can directly transfer the mycocerosate bound to the mycocerosic acid synthase (mas) onto the substrate alcohols. The sequence is that of Phthiocerol/phthiodiolone dimycocerosyl transferase (papA5) from Mycobacterium sp. (strain JLS).